The following is a 272-amino-acid chain: Tryptophan synthase alpha chain (272 aa).

Active-site proton acceptor residues include Glu49 and Asp60.

It belongs to the TrpA family. As to quaternary structure, tetramer of two alpha and two beta chains.

It catalyses the reaction (1S,2R)-1-C-(indol-3-yl)glycerol 3-phosphate + L-serine = D-glyceraldehyde 3-phosphate + L-tryptophan + H2O. Its pathway is amino-acid biosynthesis; L-tryptophan biosynthesis; L-tryptophan from chorismate: step 5/5. Its function is as follows. The alpha subunit is responsible for the aldol cleavage of indoleglycerol phosphate to indole and glyceraldehyde 3-phosphate. This Polaromonas sp. (strain JS666 / ATCC BAA-500) protein is Tryptophan synthase alpha chain.